The chain runs to 526 residues: ATP-dependent RNA helicase DBP3 (526 aa).

The span at 1 to 33 shows a compositional bias: basic and acidic residues; the sequence is MVEEHKNKKRRQEDGPADVPEKKVKVSKSEKKD. Positions 1–86 are disordered; sequence MVEEHKNKKR…SSQGYTQSES (86 aa). Basic residues predominate over residues 34–65; it reads KKEKKEKKEKKEKKEKKEKKEKKEKKEKKKKY. Positions 69–86 are enriched in polar residues; the sequence is ATISGSAQSSQGYTQSES. Positions 118 to 144 match the Q motif motif; the sequence is LSFDQIQLNSKISAVVNKFPTPTPIQS. Residues 147–318 form the Helicase ATP-binding domain; that stretch reads WPYLLSGKDV…STFMNQPVKV (172 aa). 160–167 is an ATP binding site; that stretch reads AETGSGKT. Residues 265 to 268 carry the DEAD box motif; it reads DEAD. Residues 334-496 enclose the Helicase C-terminal domain; it reads QIVEVIEPFD…PVPDELLKFG (163 aa).

It belongs to the DEAD box helicase family. DDX5/DBP2 subfamily.

It is found in the nucleus. The protein localises to the nucleolus. The catalysed reaction is ATP + H2O = ADP + phosphate + H(+). ATP-dependent RNA helicase required for 60S ribosomal subunit synthesis. Involved in efficient pre-rRNA processing, predominantly at site A3, which is necessary for the normal formation of 25S and 5.8S rRNAs. This Scheffersomyces stipitis (strain ATCC 58785 / CBS 6054 / NBRC 10063 / NRRL Y-11545) (Yeast) protein is ATP-dependent RNA helicase DBP3 (DBP3).